We begin with the raw amino-acid sequence, 2250 residues long: DNA polymerase epsilon catalytic subunit A (2250 aa).

3 disordered regions span residues 1-63 (MPSR…GTAA), 235-259 (NGHGDDENRAWGAEDDTKKKKDKEP), and 1990-2010 (PGTEATSTMNPTKEKEKKAAS). Gly residues predominate over residues 32–41 (GGGGGGGGVA). A compositionally biased stretch (basic and acidic residues) spans 249 to 259 (DDTKKKKDKEP). Positions 1990–2000 (PGTEATSTMNP) are enriched in polar residues. The Zn(2+) site is built by cysteine 2118, cysteine 2121, cysteine 2156, and cysteine 2159. A CysA-type zinc finger spans residues 2118 to 2159 (CKKCNAIRDVDLCRDPDRLPSVNPDSGEMLEPARKNWVCHKC). Residues cysteine 2190, cysteine 2193, cysteine 2205, and cysteine 2207 each coordinate [4Fe-4S] cluster. Positions 2190-2207 (CLKCSQTKSDNLAATCKC) match the CysB motif motif.

It belongs to the DNA polymerase type-B family. Heterotetramer. Consists of 4 subunits: POL2, DPB2, DPB3 and DPB4. Requires [4Fe-4S] cluster as cofactor.

Its subcellular location is the nucleus. The enzyme catalyses DNA(n) + a 2'-deoxyribonucleoside 5'-triphosphate = DNA(n+1) + diphosphate. In terms of biological role, DNA polymerase II participates in chromosomal DNA replication. The chain is DNA polymerase epsilon catalytic subunit A (POL2) from Cryptococcus neoformans var. neoformans serotype D (strain JEC21 / ATCC MYA-565) (Filobasidiella neoformans).